Reading from the N-terminus, the 207-residue chain is Ribosomal RNA small subunit methyltransferase G (207 aa).

S-adenosyl-L-methionine contacts are provided by residues glycine 73, leucine 78, 124-125 (VE), and arginine 139.

Belongs to the methyltransferase superfamily. RNA methyltransferase RsmG family.

The protein localises to the cytoplasm. The catalysed reaction is guanosine(527) in 16S rRNA + S-adenosyl-L-methionine = N(7)-methylguanosine(527) in 16S rRNA + S-adenosyl-L-homocysteine. In terms of biological role, specifically methylates the N7 position of guanine in position 527 of 16S rRNA. The polypeptide is Ribosomal RNA small subunit methyltransferase G (Cronobacter sakazakii (strain ATCC BAA-894) (Enterobacter sakazakii)).